The chain runs to 534 residues: uncharacterized protein (534 aa).

The next 5 helical transmembrane spans lie at 4–22, 24–46, 56–75, 82–104, and 134–156; these read ILVLLCVIALGLLVGRVSF, GISLGTSAILFVALLAGHYGWTI, ALFVYCVGISAGPTFFRGLA, AITGSVIVLTGVAVTWTSARLLG, and PAAVAVGFGVAYPIGIIAVVLFV. The segment at 167-187 is disordered; that stretch reads GDSDGTDSASETSGQSSAEIA. A compositionally biased stretch (polar residues) spans 172 to 187; sequence TDSASETSGQSSAEIA. RCK C-terminal domains are found at residues 180 to 264 and 265 to 349; these read GQSS…TLGE and LQDT…AVGH. 6 helical membrane-spanning segments follow: residues 359-378, 382-401, 408-430, 445-467, 479-501, and 511-533; these read LLSLVAGIVLGIFVGNLSLQ, FSMSLGIAGGPLMVGLILGH, IRGSYPPAAMLLMTEGGLALFLA, MERGAMLCVAAAAIAIIPLLVGF, WQSLGATCGGMTSTPGLAVLTGA, and YVAAYPVALVLITVAAPWLVELI.

It belongs to the AAE transporter (TC 2.A.81) family.

The protein localises to the cell membrane. This is an uncharacterized protein from Rhodopirellula baltica (strain DSM 10527 / NCIMB 13988 / SH1).